A 212-amino-acid polypeptide reads, in one-letter code: Mediator of RNA polymerase II transcription subunit 20 (212 aa).

It belongs to the Mediator complex subunit 20 family. Component of the Mediator complex, which is composed of MED1, MED4, MED6, MED7, MED8, MED9, MED10, MED11, MED12, MED13, MED13L, MED14, MED15, MED16, MED17, MED18, MED19, MED20, MED21, MED22, MED23, MED24, MED25, MED26, MED27, MED29, MED30, MED31, CCNC, CDK8 and CDC2L6/CDK11. The MED12, MED13, CCNC and CDK8 subunits form a distinct module termed the CDK8 module. Mediator containing the CDK8 module is less active than Mediator lacking this module in supporting transcriptional activation. Individual preparations of the Mediator complex lacking one or more distinct subunits have been variously termed ARC, CRSP, DRIP, PC2, SMCC and TRAP. Interacts with PPARG.

The protein resides in the nucleus. In terms of biological role, component of the Mediator complex, a coactivator involved in the regulated transcription of nearly all RNA polymerase II-dependent genes. Mediator functions as a bridge to convey information from gene-specific regulatory proteins to the basal RNA polymerase II transcription machinery. Mediator is recruited to promoters by direct interactions with regulatory proteins and serves as a scaffold for the assembly of a functional preinitiation complex with RNA polymerase II and the general transcription factors. In Mus musculus (Mouse), this protein is Mediator of RNA polymerase II transcription subunit 20 (Med20).